A 368-amino-acid polypeptide reads, in one-letter code: tRNA-specific 2-thiouridylase MnmA (368 aa).

ATP is bound by residues 11–18 (GMSGGVDS) and Met-37. The segment at 97–99 (NPD) is interaction with target base in tRNA. Cys-102 acts as the Nucleophile in catalysis. A disulfide bridge connects residues Cys-102 and Cys-199. Gly-127 is an ATP binding site. The segment at 149–151 (KDQ) is interaction with tRNA. Residue Cys-199 is the Cysteine persulfide intermediate of the active site. The interval 311-312 (RY) is interaction with tRNA.

This sequence belongs to the MnmA/TRMU family. In terms of assembly, interacts with TusE.

It localises to the cytoplasm. The enzyme catalyses S-sulfanyl-L-cysteinyl-[protein] + uridine(34) in tRNA + AH2 + ATP = 2-thiouridine(34) in tRNA + L-cysteinyl-[protein] + A + AMP + diphosphate + H(+). Functionally, catalyzes the 2-thiolation of uridine at the wobble position (U34) of tRNA(Lys), tRNA(Glu) and tRNA(Gln), leading to the formation of s(2)U34, the first step of tRNA-mnm(5)s(2)U34 synthesis. Sulfur is provided by IscS, via a sulfur-relay system. Binds ATP and its substrate tRNAs. This chain is tRNA-specific 2-thiouridylase MnmA, found in Escherichia coli O1:K1 / APEC.